The sequence spans 332 residues: Inositol 2-dehydrogenase 2 (332 aa).

It belongs to the Gfo/Idh/MocA family. Homotetramer.

The catalysed reaction is myo-inositol + NAD(+) = scyllo-inosose + NADH + H(+). Involved in the oxidation of myo-inositol (MI) to 2-keto-myo-inositol (2KMI or 2-inosose). In Paenarthrobacter aurescens (strain TC1), this protein is Inositol 2-dehydrogenase 2.